The chain runs to 338 residues: Glycerol-3-phosphate dehydrogenase [NAD(P)+] (338 aa).

3 residues coordinate NADPH: serine 13, tryptophan 14, and lysine 108. Residues lysine 108, glycine 139, and serine 141 each contribute to the sn-glycerol 3-phosphate site. Alanine 143 contacts NADPH. The sn-glycerol 3-phosphate site is built by lysine 194, aspartate 247, serine 257, arginine 258, and asparagine 259. Lysine 194 serves as the catalytic Proton acceptor. Arginine 258 contacts NADPH. Residues valine 282 and glutamate 284 each coordinate NADPH.

Belongs to the NAD-dependent glycerol-3-phosphate dehydrogenase family.

It is found in the cytoplasm. The catalysed reaction is sn-glycerol 3-phosphate + NAD(+) = dihydroxyacetone phosphate + NADH + H(+). The enzyme catalyses sn-glycerol 3-phosphate + NADP(+) = dihydroxyacetone phosphate + NADPH + H(+). The protein operates within membrane lipid metabolism; glycerophospholipid metabolism. In terms of biological role, catalyzes the reduction of the glycolytic intermediate dihydroxyacetone phosphate (DHAP) to sn-glycerol 3-phosphate (G3P), the key precursor for phospholipid synthesis. In Streptococcus uberis (strain ATCC BAA-854 / 0140J), this protein is Glycerol-3-phosphate dehydrogenase [NAD(P)+].